A 181-amino-acid chain; its full sequence is Inner membrane-spanning protein YciB (181 aa).

5 helical membrane passes run 8 to 28, 53 to 73, 76 to 96, 121 to 141, and 149 to 169; these read FPIICFFVAYKFWGIYIATAA, ITLIFILLLGSFTLVFHNAIF, WKPTIVYWIFAIVLFGSHFFG, LSWALFFLILGVLNLFVVYNF, and FKLFGTLVLTLVFILGQAFYI.

It belongs to the YciB family.

The protein localises to the cell inner membrane. Its function is as follows. Plays a role in cell envelope biogenesis, maintenance of cell envelope integrity and membrane homeostasis. The chain is Inner membrane-spanning protein YciB from Coxiella burnetii (strain RSA 331 / Henzerling II).